A 68-amino-acid chain; its full sequence is Beta-defensin 1 (68 aa).

Residues 1-21 (MRTSYLLLFTLCLLLSEMASG) form the signal peptide. A propeptide spanning residues 22-32 (DNFLTGLGHRS) is cleaved from the precursor. Cystine bridges form between Cys-37–Cys-66, Cys-44–Cys-59, and Cys-49–Cys-67.

This sequence belongs to the beta-defensin family. As to quaternary structure, monomer. Homodimer.

Its subcellular location is the secreted. The protein localises to the membrane. Its function is as follows. Has bactericidal activity. May act as a ligand for C-C chemokine receptor CCR6. Positively regulates the sperm motility and bactericidal activity in a CCR6-dependent manner. Binds to CCR6 and triggers Ca2+ mobilization in the sperm which is important for its motility. This Cercopithecus erythrogaster (Red-bellied monkey) protein is Beta-defensin 1 (DEFB1).